The sequence spans 761 residues: Subtilisin-like protease SBT3 (761 aa).

The signal sequence occupies residues 1 to 22; the sequence is MELLHLLLFSWALSAHLFLALA. A propeptide spanning residues 23–112 is cleaved from the precursor; that stretch reads QRSTYIVHLD…AYKDRTVEPH (90 aa). In terms of domain architecture, Inhibitor I9 spans 26-110; the sequence is TYIVHLDKSL…ISAYKDRTVE (85 aa). The Peptidase S8 domain maps to 116 to 606; sequence TSDFLKLNPS…AGHVDPNRAL (491 aa). Aspartate 144 (charge relay system) is an active-site residue. Cysteine 170 and cysteine 181 form a disulfide bridge. N-linked (GlcNAc...) (complex) asparagine; alternate glycans are attached at residues asparagine 177 and asparagine 203. 2 N-linked (GlcNAc...) (paucimannose) asparagine; alternate glycosylation sites follow: asparagine 177 and asparagine 203. The active-site Charge relay system is the histidine 215. Residue asparagine 376 is glycosylated (N-linked (GlcNAc...) (paucimannose) asparagine; partial). A disulfide bond links cysteine 382 and cysteine 401. The active-site Charge relay system is the serine 538. Residues 574 to 598 are disordered; that stretch reads LDNTRKPIKDSDNNKAATPLDMGAG. A compositionally biased stretch (basic and acidic residues) spans 575 to 586; sequence DNTRKPIKDSDN. Residues cysteine 624 and cysteine 645 are joined by a disulfide bond. 2 N-linked (GlcNAc...) (complex) asparagine; alternate glycosylation sites follow: asparagine 697 and asparagine 745. N-linked (GlcNAc...) (paucimannose) asparagine; alternate glycans are attached at residues asparagine 697 and asparagine 745. Residues 756-761 form a necessary for prodomain cleavage and secretion region; it reads PIIEVW.

This sequence belongs to the peptidase S8 family. As to quaternary structure, homodimer. Propeptide is internally cleaved at Asn-38 and Asp-52 in a pH-dependent manner leading to the dissociation of the propeptide from the catalytic domain and resulting in the release of the active subtilase. Cleavage occurs at pH 5.7 and to a stronger extent at pH 5.2. Expressed in flowers, cotyledons and leaves with the highest expression in roots.

The protein resides in the secreted. Its activity is regulated as follows. Inhibited by 1 mM 4-(2-aminoethyl)-benzenesulfonyl fluoride (AEBSF), a general inhibitor of serine proteinases, but not by the more selective serine protease inhibitors N-alpha-tosyl-L-lysinyl-chloromethylketone (TLCK), N-tosyl-L-phenylalaninyl-chloromethylketone (TPCK), leupeptin, aprotinin or benzamidine. Its proteolytic activity is autoinhibited by the non-covalent binding of the propeptide to the catalytic domain. No effect on activity by the addition of CaCl(2) or calcium chelators. In terms of biological role, serine protease. Has preference for Gln in the P1 position and Lys in the P2 position of oligopeptide substrates. Active also with His in the P1 position. Involved in resistance against insects partly by regulating expression of systemic wound response genes and possibly by its post-ingestive activity in the insect gut. Apart from the role in defense, may be involved in regulation of pectin methylesterases (PMEs) activity and pectin methylesterification of the cell wall. The chain is Subtilisin-like protease SBT3 from Solanum lycopersicum (Tomato).